We begin with the raw amino-acid sequence, 130 residues long: Small ribosomal subunit protein uS9 (130 aa).

This sequence belongs to the universal ribosomal protein uS9 family.

This is Small ribosomal subunit protein uS9 from Pseudomonas putida (strain W619).